The chain runs to 224 residues: UPF0173 metal-dependent hydrolase TON_1314 (224 aa).

This sequence belongs to the UPF0173 family.

The sequence is that of UPF0173 metal-dependent hydrolase TON_1314 from Thermococcus onnurineus (strain NA1).